A 356-amino-acid chain; its full sequence is Protein pelota homolog (356 aa).

The protein belongs to the eukaryotic release factor 1 family. Pelota subfamily. Monomer. A divalent metal cation is required as a cofactor.

The protein resides in the cytoplasm. Its function is as follows. May function in recognizing stalled ribosomes, interact with stem-loop structures in stalled mRNA molecules, and effect endonucleolytic cleavage of the mRNA. May play a role in the release non-functional ribosomes and degradation of damaged mRNAs. Has endoribonuclease activity. The polypeptide is Protein pelota homolog (Pyrococcus abyssi (strain GE5 / Orsay)).